The primary structure comprises 398 residues: Enoyl-[acyl-carrier-protein] reductase [NADH] (398 aa).

NAD(+) contacts are provided by residues 48 to 53 (GASTGY), 74 to 75 (FE), 111 to 112 (DA), and 139 to 140 (LA). Y225 lines the substrate pocket. Catalysis depends on Y235, which acts as the Proton donor. NAD(+)-binding positions include K244 and 273–275 (VVT).

This sequence belongs to the TER reductase family. Monomer.

It catalyses the reaction a 2,3-saturated acyl-[ACP] + NAD(+) = a (2E)-enoyl-[ACP] + NADH + H(+). It participates in lipid metabolism; fatty acid biosynthesis. In terms of biological role, involved in the final reduction of the elongation cycle of fatty acid synthesis (FAS II). Catalyzes the reduction of a carbon-carbon double bond in an enoyl moiety that is covalently linked to an acyl carrier protein (ACP). The chain is Enoyl-[acyl-carrier-protein] reductase [NADH] from Pseudomonas fluorescens (strain ATCC BAA-477 / NRRL B-23932 / Pf-5).